The sequence spans 357 residues: Phosphoribosylformylglycinamidine cyclo-ligase (357 aa).

This sequence belongs to the AIR synthase family.

It localises to the cytoplasm. The catalysed reaction is 2-formamido-N(1)-(5-O-phospho-beta-D-ribosyl)acetamidine + ATP = 5-amino-1-(5-phospho-beta-D-ribosyl)imidazole + ADP + phosphate + H(+). The protein operates within purine metabolism; IMP biosynthesis via de novo pathway; 5-amino-1-(5-phospho-D-ribosyl)imidazole from N(2)-formyl-N(1)-(5-phospho-D-ribosyl)glycinamide: step 2/2. The protein is Phosphoribosylformylglycinamidine cyclo-ligase of Allorhizobium ampelinum (strain ATCC BAA-846 / DSM 112012 / S4) (Agrobacterium vitis (strain S4)).